Reading from the N-terminus, the 224-residue chain is MAQKEEAAEAAAPASQNGDDLENLEDPEKLKELIDLPPFEIVTGVRLPVNFFKFQFRNVEYSSGRNKTFLCYVVEVQSKGGQAQATQGYLEDEHAGAHAEEAFFNTILPAFDPALKYNVTWYVSSSPCAACADRILKTLSKTKNLRLLILVSRLFMWEEPEVQAALKKLKEAGCKLRIMKPQDFEYIWQNFVEQEEGESKAFEPWEDIQENFLYYEEKLADILK.

The interval 1–23 (MAQKEEAAEAAAPASQNGDDLEN) is disordered. The Zn(2+) site is built by Glu-60 and His-98. The CMP/dCMP-type deaminase domain maps to 64–169 (GRNKTFLCYV…PEVQAALKKL (106 aa)). Residue Glu-100 is the Proton donor of the active site. Zn(2+) is bound by residues Cys-128 and Cys-131.

This sequence belongs to the cytidine and deoxycytidylate deaminase family. Homotetramer. Zn(2+) serves as cofactor. Expressed exclusively in heart and skeletal muscle.

The enzyme catalyses cytidine(6666) in apoB mRNA + H2O + H(+) = uridine(6666) in apoB mRNA + NH4(+). Probable C to U editing enzyme whose physiological substrate is not yet known. Does not display detectable apoB mRNA editing. Has a low intrinsic cytidine deaminase activity. May play a role in the epigenetic regulation of gene expression through the process of active DNA demethylation. This Mus musculus (Mouse) protein is C-&gt;U-editing enzyme APOBEC-2 (Apobec2).